Reading from the N-terminus, the 451-residue chain is MPREIITLQLGQCGNQIGFEFWKQLCAEHGISPEGIVEEFATEGTDRKDVFFYQADDEHYIPRAVLLDLEPRVIHSILNSPYAKLYNPENIYLSEHGGGAGNNWASGFSQGEKIHEDIFDIIDREADGSDSLEGFVLCHSIAGGTGSGLGSYLLERLNDRYPKKLVQTYSVFPNQDEMSDVVVQPYNSLLTLKRLTQNADCVVVLDNTALNRIATDRLHIQNPSFSQINQLVSTIMSASTTTLRYPGYMNNDLIGLIASLIPTPRLHFLMTGYTPLTTDQSVASVRKTTVLDVMRRLLQPKNVMVSTGRDRQTNHCYIAILNIIQGEVDPTQVHKSLQRIRERKLANFIPWGPASIQVALSRKSPYLPSAHRVSGLMMANHTSISSLFERTCRQYDKLRKREAFLEQFRKEDMFKDNFDEMDTSREIVQQLIDEYHAATRPDYISWGTQEQ.

Ser131 carries the post-translational modification Phosphoserine; by BRSK1. 142 to 148 (AGGTGSG) is a binding site for GTP.

It belongs to the tubulin family. Component of the gamma-tubulin ring complex (gTuRC) consisting of TUBGCP2, TUBGCP3, TUBGCP4, TUBGCP5 and TUBGCP6 and gamma-tubulin TUBG1 or TUBG2. TUBGCP2, TUBGCP3, TUBGCP4, TUBGCP5 and TUBGCP6 assemble in a 5:5:2:1:1 stoichiometry; each is associated with a gamma-tubulin, thereby arranging 14 gamma-tubulins in a helical manner. Gamma-tubulin at the first position is blocked by TUBGCP3 at the last position, allowing 13 protafilaments to grow into a microtubule. The gTuRC (via TUBGCP3 and TUBGCP6) interacts with ACTB and MZT1; the interactions form a luminal bridge that stabilizes the initial structure during complex assembly. The gTuRC (via TUBGCP2) interacts with MZT2A/MZT2B and CDK5RAP2 (via CM1 motif); the interactions play a role in gTuRC activation. Interacts with alpha-beta tubulin heterodimers; the interaction allows microtubules to nucleate from the gTuRC. Interacts with B9D2. Interacts with CDK5RAP2; the interaction is leading to centrosomal localization of TUBG1 and CDK5RAP2. Interacts with CIMAP3. Interacts with SAS6 and NUP62 at the centrosome. Interacts with EML3 (phosphorylated at 'Thr-881') and HAUS8. Interacts with DNM2; this interaction may participate in centrosome cohesion. Interacts with CCDC66. Phosphorylation at Ser-131 by BRSK1 regulates centrosome duplication, possibly by mediating relocation of gamma-tubulin and its associated proteins from the cytoplasm to the centrosome.

The protein localises to the cytoplasm. It localises to the cytoskeleton. The protein resides in the microtubule organizing center. Its subcellular location is the centrosome. It is found in the spindle. Functionally, tubulin is the major constituent of microtubules, protein filaments consisting of alpha- and beta-tubulin heterodimers. Gamma-tubulin is a key component of the gamma-tubulin ring complex (gTuRC) which mediates microtubule nucleation. The gTuRC regulates the minus-end nucleation of alpha-beta tubulin heterodimers that grow into microtubule protafilaments, a critical step in centrosome duplication and spindle formation. The protein is Tubulin gamma-1 chain of Homo sapiens (Human).